We begin with the raw amino-acid sequence, 118 residues long: Large ribosomal subunit protein bL19 (118 aa).

This sequence belongs to the bacterial ribosomal protein bL19 family.

Functionally, this protein is located at the 30S-50S ribosomal subunit interface and may play a role in the structure and function of the aminoacyl-tRNA binding site. The sequence is that of Large ribosomal subunit protein bL19 from Dictyoglomus thermophilum (strain ATCC 35947 / DSM 3960 / H-6-12).